The primary structure comprises 287 residues: Bifunctional protein FolD (287 aa).

NADP(+) contacts are provided by residues 165–167 (GRS), Ser-190, and Ile-231.

It belongs to the tetrahydrofolate dehydrogenase/cyclohydrolase family. In terms of assembly, homodimer.

It catalyses the reaction (6R)-5,10-methylene-5,6,7,8-tetrahydrofolate + NADP(+) = (6R)-5,10-methenyltetrahydrofolate + NADPH. The enzyme catalyses (6R)-5,10-methenyltetrahydrofolate + H2O = (6R)-10-formyltetrahydrofolate + H(+). It functions in the pathway one-carbon metabolism; tetrahydrofolate interconversion. Catalyzes the oxidation of 5,10-methylenetetrahydrofolate to 5,10-methenyltetrahydrofolate and then the hydrolysis of 5,10-methenyltetrahydrofolate to 10-formyltetrahydrofolate. In Trichodesmium erythraeum (strain IMS101), this protein is Bifunctional protein FolD.